Consider the following 413-residue polypeptide: Zeaxanthin glucosyltransferase (413 aa).

It belongs to the UDP-glycosyltransferase family.

The enzyme catalyses all-trans-zeaxanthin + 2 UDP-alpha-D-glucose = zeaxanthin bis(beta-D-glucoside) + 2 UDP + 2 H(+). It functions in the pathway carotenoid biosynthesis; zeaxanthin diglucoside biosynthesis. In terms of biological role, catalyzes the glycosylation reaction which converts zeaxanthin to zeaxanthin bis(beta-D-glucoside). The reaction proceeds in two steps with the monoglucoside as an intermediate. This chain is Zeaxanthin glucosyltransferase (crtX), found in Pseudescherichia vulneris (Escherichia vulneris).